We begin with the raw amino-acid sequence, 560 residues long: SWI/SNF complex subunit SWI3A homolog (560 aa).

The span at 1 to 13 (MSPPVAGAASSGD) shows a compositional bias: low complexity. Positions 1–22 (MSPPVAGAASSGDGPPGRPPRE) are disordered. The 104-residue stretch at 24 to 127 (YTIPASSGWF…FSASPSRPEA (104 aa)) folds into the SWIRM domain. The SANT domain occupies 242–293 (HSSSAWTDAETLLLLEGVLKHGDDWDLIAQHVRTKNKSECIARLIQLPFGEH). The segment covering 311 to 330 (TTDGKVNKSTVKESSSQPTE) has biased composition (polar residues). Disordered regions lie at residues 311–352 (TTDG…EEHP) and 414–445 (QTRA…PDKK). Positions 331–342 (TVDDMQIDGNED) are enriched in acidic residues. 2 stretches are compositionally biased toward basic and acidic residues: residues 343–352 (GADKSVEEHP) and 424–445 (RQSD…PDKK).

In terms of assembly, interacts with LFR.

It is found in the nucleus. Its function is as follows. Component of a multiprotein complex equivalent of the SWI/SNF complex, an ATP-dependent chromatin-remodeling complex, which is required for the positive and negative regulation of gene expression of a large number of genes. It changes chromatin structure by altering DNA-histone contacts within a nucleosome, leading eventually to a change in nucleosome position, thus facilitating or repressing binding of gene-specific transcription factors. The chain is SWI/SNF complex subunit SWI3A homolog from Oryza sativa subsp. japonica (Rice).